A 362-amino-acid chain; its full sequence is Cobalt-precorrin-5B C(1)-methyltransferase (362 aa).

It belongs to the CbiD family.

The catalysed reaction is Co-precorrin-5B + S-adenosyl-L-methionine = Co-precorrin-6A + S-adenosyl-L-homocysteine. It participates in cofactor biosynthesis; adenosylcobalamin biosynthesis; cob(II)yrinate a,c-diamide from sirohydrochlorin (anaerobic route): step 6/10. Its function is as follows. Catalyzes the methylation of C-1 in cobalt-precorrin-5B to form cobalt-precorrin-6A. This Burkholderia orbicola (strain MC0-3) protein is Cobalt-precorrin-5B C(1)-methyltransferase.